An 89-amino-acid polypeptide reads, in one-letter code: Small ribosomal subunit protein uS19 (89 aa).

The protein belongs to the universal ribosomal protein uS19 family.

Functionally, protein S19 forms a complex with S13 that binds strongly to the 16S ribosomal RNA. This is Small ribosomal subunit protein uS19 from Bacteroides fragilis (strain YCH46).